The following is a 150-amino-acid chain: 3-dehydroquinate dehydratase (150 aa).

Y22 acts as the Proton acceptor in catalysis. N73, H79, and D86 together coordinate substrate. H99 acts as the Proton donor in catalysis. Substrate contacts are provided by residues 100-101 (LT) and R110.

The protein belongs to the type-II 3-dehydroquinase family. As to quaternary structure, homododecamer.

The enzyme catalyses 3-dehydroquinate = 3-dehydroshikimate + H2O. It functions in the pathway metabolic intermediate biosynthesis; chorismate biosynthesis; chorismate from D-erythrose 4-phosphate and phosphoenolpyruvate: step 3/7. In terms of biological role, catalyzes a trans-dehydration via an enolate intermediate. In Desulforudis audaxviator (strain MP104C), this protein is 3-dehydroquinate dehydratase.